The sequence spans 483 residues: Probable cobyric acid synthase (483 aa).

The GATase cobBQ-type domain occupies 247-433 (ELHIQIIKLP…LHGIFHNFAF (187 aa)). C325 (nucleophile) is an active-site residue. H425 is an active-site residue.

It belongs to the CobB/CobQ family. CobQ subfamily.

It participates in cofactor biosynthesis; adenosylcobalamin biosynthesis. In terms of biological role, catalyzes amidations at positions B, D, E, and G on adenosylcobyrinic A,C-diamide. NH(2) groups are provided by glutamine, and one molecule of ATP is hydrogenolyzed for each amidation. The sequence is that of Probable cobyric acid synthase from Thermococcus gammatolerans (strain DSM 15229 / JCM 11827 / EJ3).